A 203-amino-acid polypeptide reads, in one-letter code: ATP-dependent Clp protease proteolytic subunit (203 aa).

S107 acts as the Nucleophile in catalysis. Residue H132 is part of the active site.

It belongs to the peptidase S14 family. Fourteen ClpP subunits assemble into 2 heptameric rings which stack back to back to give a disk-like structure with a central cavity, resembling the structure of eukaryotic proteasomes.

The protein resides in the cytoplasm. It catalyses the reaction Hydrolysis of proteins to small peptides in the presence of ATP and magnesium. alpha-casein is the usual test substrate. In the absence of ATP, only oligopeptides shorter than five residues are hydrolyzed (such as succinyl-Leu-Tyr-|-NHMec, and Leu-Tyr-Leu-|-Tyr-Trp, in which cleavage of the -Tyr-|-Leu- and -Tyr-|-Trp bonds also occurs).. Its function is as follows. Cleaves peptides in various proteins in a process that requires ATP hydrolysis. Has a chymotrypsin-like activity. Plays a major role in the degradation of misfolded proteins. The chain is ATP-dependent Clp protease proteolytic subunit from Shewanella halifaxensis (strain HAW-EB4).